A 143-amino-acid chain; its full sequence is Large ribosomal subunit protein uL11 (143 aa).

It belongs to the universal ribosomal protein uL11 family. As to quaternary structure, part of the ribosomal stalk of the 50S ribosomal subunit. Interacts with L10 and the large rRNA to form the base of the stalk. L10 forms an elongated spine to which L12 dimers bind in a sequential fashion forming a multimeric L10(L12)X complex. In terms of processing, one or more lysine residues are methylated.

In terms of biological role, forms part of the ribosomal stalk which helps the ribosome interact with GTP-bound translation factors. This is Large ribosomal subunit protein uL11 from Novosphingobium aromaticivorans (strain ATCC 700278 / DSM 12444 / CCUG 56034 / CIP 105152 / NBRC 16084 / F199).